Here is a 466-residue protein sequence, read N- to C-terminus: Probable ribonuclease FAU-1 (466 aa).

Residues 90–152 (GAIYAGTVTD…TDGRPVLDTT (63 aa)) enclose the S1 motif domain.

It belongs to the FAU-1 family.

In terms of biological role, probable RNase involved in rRNA stability through maturation and/or degradation of precursor rRNAs. Binds to RNA in loop regions with AU-rich sequences. This Haloarcula marismortui (strain ATCC 43049 / DSM 3752 / JCM 8966 / VKM B-1809) (Halobacterium marismortui) protein is Probable ribonuclease FAU-1.